Consider the following 414-residue polypeptide: uncharacterized protein (414 aa).

3 disordered regions span residues 136-168 (SSKS…TVPT), 297-333 (PQNF…ENAS), and 346-414 (ALNA…NGSK). The segment covering 350-359 (PSRSRPTHGS) has biased composition (polar residues). Over residues 399 to 414 (SKSEKIYPEPRRNGSK) the composition is skewed to basic and acidic residues.

This is an uncharacterized protein from Homo sapiens (Human).